Consider the following 534-residue polypeptide: CTP synthase (534 aa).

The amidoligase domain stretch occupies residues M1–L265. Residue S12 participates in CTP binding. S12 is a binding site for UTP. ATP is bound at residue G13–I18. Y53 provides a ligand contact to L-glutamine. Residue D70 participates in ATP binding. Residues D70 and E140 each coordinate Mg(2+). Residues D147–E149, K186–Q191, and K222 contribute to the CTP site. Residues K186–Q191 and K222 contribute to the UTP site. The Glutamine amidotransferase type-1 domain occupies K289–E530. G352 contributes to the L-glutamine binding site. Catalysis depends on C379, which acts as the Nucleophile; for glutamine hydrolysis. Residues L380–Q383, E403, and R460 each bind L-glutamine. Active-site residues include H503 and E505.

Belongs to the CTP synthase family. As to quaternary structure, homotetramer.

It carries out the reaction UTP + L-glutamine + ATP + H2O = CTP + L-glutamate + ADP + phosphate + 2 H(+). It catalyses the reaction L-glutamine + H2O = L-glutamate + NH4(+). The enzyme catalyses UTP + NH4(+) + ATP = CTP + ADP + phosphate + 2 H(+). It functions in the pathway pyrimidine metabolism; CTP biosynthesis via de novo pathway; CTP from UDP: step 2/2. Its activity is regulated as follows. Allosterically activated by GTP, when glutamine is the substrate; GTP has no effect on the reaction when ammonia is the substrate. The allosteric effector GTP functions by stabilizing the protein conformation that binds the tetrahedral intermediate(s) formed during glutamine hydrolysis. Inhibited by the product CTP, via allosteric rather than competitive inhibition. Functionally, catalyzes the ATP-dependent amination of UTP to CTP with either L-glutamine or ammonia as the source of nitrogen. Regulates intracellular CTP levels through interactions with the four ribonucleotide triphosphates. In Methanosarcina acetivorans (strain ATCC 35395 / DSM 2834 / JCM 12185 / C2A), this protein is CTP synthase.